We begin with the raw amino-acid sequence, 323 residues long: Voltage-dependent calcium channel gamma-2 subunit (323 aa).

A helical transmembrane segment spans residues 10 to 30; it reads MLLTTVGAFAAFSLMTIAVGT. A glycan (N-linked (GlcNAc...) asparagine) is linked at N48. The next 3 membrane-spanning stretches (helical) occupy residues 104–124, 134–154, and 182–202; these read SSIF…CIAA, IILS…IGII, and FGAL…HMFI. The interval 233-261 is disordered; that stretch reads YQRRSRSSSRSTEPSHSRDASPVGIKGFN. At S253 the chain carries Phosphoserine. At Y271 the chain carries Phosphotyrosine. T321 is subject to Phosphothreonine.

This sequence belongs to the PMP-22/EMP/MP20 family. CACNG subfamily. In terms of assembly, the L-type calcium channel is composed of five subunits: alpha-1, alpha-2/delta, beta and gamma. Interacts with the PDZ domains of DLG4/PSD-95 and DLG1/SAP97. May interact with GOPC. Acts as an auxiliary subunit for AMPA-selective glutamate receptors (AMPARs). Found in a complex with GRIA1, GRIA2, GRIA3, GRIA4, CNIH2, CNIH3, CACNG3, CACNG4, CACNG5, CACNG7 and CACNG8. Interacts with GRIA1 and GRIA2. Interacts with MPP2. Post-translationally, phosphorylation of Thr-321 impairs interaction with DLG1 and DLG4. Brain.

It is found in the membrane. It localises to the synapse. Its subcellular location is the synaptosome. Its function is as follows. Regulates the trafficking and gating properties of AMPA-selective glutamate receptors (AMPARs). Promotes their targeting to the cell membrane and synapses and modulates their gating properties by slowing their rates of activation, deactivation and desensitization. Does not show subunit-specific AMPA receptor regulation and regulates all AMPAR subunits. Thought to stabilize the calcium channel in an inactivated (closed) state. This Homo sapiens (Human) protein is Voltage-dependent calcium channel gamma-2 subunit (CACNG2).